We begin with the raw amino-acid sequence, 426 residues long: NADH-quinone oxidoreductase subunit H 1 (426 aa).

Transmembrane regions (helical) follow at residues 22 to 42 (LWAT…VMLM), 91 to 111 (FLFW…YLVI), 124 to 144 (IGVL…VMAG), 163 to 183 (MVSY…MTSL), 206 to 226 (FIFK…IAMV), 258 to 278 (LFFL…VTLW), 299 to 319 (FSVF…IGWV), 331 to 351 (AIGL…LLIP), 357 to 377 (VSDI…YIWY), and 392 to 412 (IGWK…AVLG).

This sequence belongs to the complex I subunit 1 family. In terms of assembly, NDH-1 is composed of 14 different subunits. Subunits NuoA, H, J, K, L, M, N constitute the membrane sector of the complex.

It localises to the cell inner membrane. It catalyses the reaction a quinone + NADH + 5 H(+)(in) = a quinol + NAD(+) + 4 H(+)(out). In terms of biological role, NDH-1 shuttles electrons from NADH, via FMN and iron-sulfur (Fe-S) centers, to quinones in the respiratory chain. The immediate electron acceptor for the enzyme in this species is believed to be ubiquinone. Couples the redox reaction to proton translocation (for every two electrons transferred, four hydrogen ions are translocated across the cytoplasmic membrane), and thus conserves the redox energy in a proton gradient. This subunit may bind ubiquinone. The protein is NADH-quinone oxidoreductase subunit H 1 of Koribacter versatilis (strain Ellin345).